We begin with the raw amino-acid sequence, 543 residues long: Sarafotoxin (543 aa).

An N-terminal signal peptide occupies residues 1 to 23 (MALLPRLAAGGLLLLLALAALEG). Positions 24–69 (KPAPSALSQLLEKRSEDQAAAGRIIDGGDTKQAARDPSPQRNVEPL) are excised as a propeptide. The interval 45–65 (GRIIDGGDTKQAARDPSPQRN) is disordered. Repeat copies occupy residues 51-90 (GDTK…DVIW), 91-130 (RDTK…DVIW), 131-170 (RDTK…DVIW), 171-210 (RDTK…DVIW), 211-250 (RDTK…DVIW), 251-290 (RDTK…GIIW), 291-330 (RDTK…DVIW), 331-370 (RDTK…DVIW), 371-410 (RDTK…DVIW), 411-450 (RDTK…DVIW), 451-490 (RDTK…DVIW), and 491-530 (RDTK…DVIW). Residues 51 to 530 (GDTKQAARDP…LNFCHQDVIW (480 aa)) are 12 X 40 AA tandem repeats. 2 disulfide bridges follow: cysteine 70-cysteine 84 and cysteine 72-cysteine 80. Residues 92–109 (DTKQAARDPSPQRNVEPL) constitute a propeptide that is removed on maturation. 2 disulfide bridges follow: cysteine 110-cysteine 124 and cysteine 112-cysteine 120. A propeptide spanning residues 132–149 (DTKQAARDPSPQRNVEPL) is cleaved from the precursor. Cystine bridges form between cysteine 150-cysteine 164 and cysteine 152-cysteine 160. Positions 172-189 (DTKQAARDPSPQRNVEPL) are excised as a propeptide. 2 cysteine pairs are disulfide-bonded: cysteine 190/cysteine 204 and cysteine 192/cysteine 200. Residues 212 to 229 (DTKQAARDPSPQRNVEPL) constitute a propeptide that is removed on maturation. 2 disulfide bridges follow: cysteine 230–cysteine 244 and cysteine 232–cysteine 240. The propeptide occupies 252–269 (DTKQAARDPSPQRNVEPL). 2 disulfides stabilise this stretch: cysteine 270-cysteine 284 and cysteine 272-cysteine 280. A propeptide spanning residues 292-309 (DTKQAARDPSPQRNVEPL) is cleaved from the precursor. 2 disulfides stabilise this stretch: cysteine 310–cysteine 324 and cysteine 312–cysteine 320. A propeptide spanning residues 332 to 349 (DTKQAARDPSPQRNVEPL) is cleaved from the precursor. 2 disulfide bridges follow: cysteine 350–cysteine 364 and cysteine 352–cysteine 360. Residues 372–389 (DTKQAARDPSPQRNVEPL) constitute a propeptide that is removed on maturation. Cystine bridges form between cysteine 390/cysteine 404 and cysteine 392/cysteine 400. The propeptide occupies 412-429 (DTKQAARDPSPQRNVEPL). 2 cysteine pairs are disulfide-bonded: cysteine 430/cysteine 444 and cysteine 432/cysteine 440. A propeptide spanning residues 452 to 469 (DTKQAARDPSPQRNVEPL) is cleaved from the precursor. Intrachain disulfides connect cysteine 470–cysteine 484 and cysteine 472–cysteine 480. Residues 492–509 (DTKQAARDPSPQRNVEPL) constitute a propeptide that is removed on maturation. 2 disulfide bridges follow: cysteine 510-cysteine 524 and cysteine 512-cysteine 520. Residues 532–543 (NADTSANPEFLG) constitute a propeptide that is removed on maturation.

This sequence belongs to the endothelin/sarafotoxin family. In terms of tissue distribution, expressed by the venom gland.

It localises to the secreted. Its function is as follows. Vasoconstrictor activity. These toxins cause cardiac arrest probably as a result of coronary vasospasm. Functionally, vasoconstrictor activity. Causes cardiac arrest probably as a result of coronary vasospasm. Displays high agonistic activities towards endothelin-2 receptor (EDNRB) (displays affinity in the picomolar range) and endothelin-1 receptor (EDNRA) (lower affinities). The sequence is that of Sarafotoxin from Atractaspis engaddensis (Israeli burrowing asp).